Here is a 111-residue protein sequence, read N- to C-terminus: MSNAPSNTPTGFNYKPGHTLYIRNFGTDMRARTLGQAFEKWGRIVRCDIPISSNPQAHRYAFVEFEEREKAELAHEKMRNAKIGNDIIFVEWAKSRERYHRDDKRRLSNYA.

An RRM domain is found at 18-95; it reads HTLYIRNFGT…DIIFVEWAKS (78 aa).

The protein belongs to the splicing factor SR family.

The protein resides in the nucleus. Its function is as follows. Has a role in pre-mRNA splicing where it is involved in spliceosome assembly. The polypeptide is Putative splicing factor C222.18 (Schizosaccharomyces pombe (strain 972 / ATCC 24843) (Fission yeast)).